The following is a 98-amino-acid chain: Acylphosphatase (98 aa).

The Acylphosphatase-like domain maps to 12-98 (RLSAWVHGHV…DATMTGFSER (87 aa)). Residues Arg27 and Asn45 contribute to the active site.

This sequence belongs to the acylphosphatase family.

It carries out the reaction an acyl phosphate + H2O = a carboxylate + phosphate + H(+). The polypeptide is Acylphosphatase (acyP) (Mycolicibacterium smegmatis (strain ATCC 700084 / mc(2)155) (Mycobacterium smegmatis)).